The sequence spans 239 residues: Ribosomal RNA large subunit methyltransferase E (239 aa).

The segment at M1–K20 is disordered. Basic residues predominate over residues T11–K20. The S-adenosyl-L-methionine site is built by G81, W83, D104, D120, and D144. The Proton acceptor role is filled by K184.

The protein belongs to the class I-like SAM-binding methyltransferase superfamily. RNA methyltransferase RlmE family.

The protein localises to the cytoplasm. It carries out the reaction uridine(2552) in 23S rRNA + S-adenosyl-L-methionine = 2'-O-methyluridine(2552) in 23S rRNA + S-adenosyl-L-homocysteine + H(+). In terms of biological role, specifically methylates the uridine in position 2552 of 23S rRNA at the 2'-O position of the ribose in the fully assembled 50S ribosomal subunit. The polypeptide is Ribosomal RNA large subunit methyltransferase E (Rhizobium etli (strain ATCC 51251 / DSM 11541 / JCM 21823 / NBRC 15573 / CFN 42)).